The primary structure comprises 432 residues: Probable D-serine dehydratase (432 aa).

Residue K112 is modified to N6-(pyridoxal phosphate)lysine.

The protein belongs to the serine/threonine dehydratase family. DsdA subfamily. Pyridoxal 5'-phosphate is required as a cofactor.

It carries out the reaction D-serine = pyruvate + NH4(+). The chain is Probable D-serine dehydratase from Pediococcus pentosaceus (strain ATCC 25745 / CCUG 21536 / LMG 10740 / 183-1w).